We begin with the raw amino-acid sequence, 98 residues long: Integration host factor subunit beta (98 aa).

The protein belongs to the bacterial histone-like protein family. Heterodimer of an alpha and a beta chain.

Its function is as follows. This protein is one of the two subunits of integration host factor, a specific DNA-binding protein that functions in genetic recombination as well as in transcriptional and translational control. This is Integration host factor subunit beta from Marinobacter nauticus (strain ATCC 700491 / DSM 11845 / VT8) (Marinobacter aquaeolei).